The sequence spans 409 residues: Accessory Sec system protein translocase subunit SecY2 (409 aa).

10 consecutive transmembrane segments (helical) span residues 16-36, 61-81, 104-124, 132-152, 161-181, 190-210, 242-262, 286-306, 341-361, and 374-394; these read ILITFSLIIIFLLGRYVPIPG, LSQVGVFSLGIGPMMTTMILL, VVMLVIAIIQGLAIAISFQYH, LLLATMILVTGAYIISWIGNL, MTILVVVGMLVGQFNNIPLIF, LAIILFLLWTLVAMYLMITFE, GMAFMYVYTLLMFPQYIIILL, GVVIYMILMLVLSVAFTFVNI, LFGTFSGFFMAFLGGVPLLFA, and TGIFMMITGMSFMILDEFQVI.

The protein belongs to the SecY/SEC61-alpha family. SecY2 subfamily. Component of the accessory SecA2/SecY2 protein translocase complex required to export cell wall proteins. May form heterotrimers with SecE and SecG subunits.

It is found in the cell membrane. Functionally, part of the accessory SecA2/SecY2 system specifically required for export of possible cell wall proteins. The central subunit of a protein translocation channel. The polypeptide is Accessory Sec system protein translocase subunit SecY2 (Streptococcus agalactiae serotype Ia (strain ATCC 27591 / A909 / CDC SS700)).